Reading from the N-terminus, the 201-residue chain is 3-isopropylmalate dehydratase small subunit (201 aa).

The protein belongs to the LeuD family. LeuD type 1 subfamily. As to quaternary structure, heterodimer of LeuC and LeuD.

It catalyses the reaction (2R,3S)-3-isopropylmalate = (2S)-2-isopropylmalate. Its pathway is amino-acid biosynthesis; L-leucine biosynthesis; L-leucine from 3-methyl-2-oxobutanoate: step 2/4. Functionally, catalyzes the isomerization between 2-isopropylmalate and 3-isopropylmalate, via the formation of 2-isopropylmaleate. The protein is 3-isopropylmalate dehydratase small subunit of Paracoccus denitrificans (strain Pd 1222).